A 149-amino-acid chain; its full sequence is UPF0179 protein TON_1048 (149 aa).

It belongs to the UPF0179 family.

This Thermococcus onnurineus (strain NA1) protein is UPF0179 protein TON_1048.